Here is a 570-residue protein sequence, read N- to C-terminus: MAGGAREVLTLQLGHFAGFVGAHWWNQQDAALGQATDSKEPLGELCPDVLYRTGRTLHGQETYTPRLILMDLKGSLSSLKEEGGLYRDKQLDAAIAWQGKLTTHKEELYPKNPYLQDFLSAEGVLSSDGVWRVKSIPNGKGSPPLTTATTPKPLIPTEASIRVWSDFLRVHLHPRSICMIQKYNHDGEAGRLEAFGQGESVLKEPKYQEELEDRLHFYVEECDYLQGFQILCDLHDGFSGVGAKAAELLQDEYSGRGIITWGLLPGPYHRGEAQRNIYRLLNTAFGLVHLTAHSSLVCPLSLGGSLGLRPEPPVNFPYLHYDATLPFHCSAILATALDTVTVPYRLCSSPVSMVHLADMLSFCGKKVVTAGAIIPFPLAPGQSLPDSLMQFGGATPWTPLSACGEPSGTRCFAQSVVLRGIDRACHTSQLTPGTPPPSALHACTTGEEVLAQYLQQQQPGVMSSSRLLLTPCRVAPPYPHLFSSCGPPGMVLDGSPKGAAVESIPVFGALCSSSSLHQTLEALARDLTKLDLRRWASFMDAGVEHDDIAELLQELQSLAQCYQDGDSLVD.

A Phosphoserine modification is found at Ser-495.

This sequence belongs to the misato family.

Its subcellular location is the mitochondrion outer membrane. It is found in the cytoplasm. In terms of biological role, involved in the regulation of mitochondrial distribution and morphology. Required for mitochondrial fusion and mitochondrial network formation. The chain is Protein misato homolog 1 (MSTO1) from Pongo pygmaeus (Bornean orangutan).